An 809-amino-acid polypeptide reads, in one-letter code: Ferric-pyoverdine BN7/BN8 receptor (809 aa).

The signal sequence occupies residues methionine 1–alanine 45. Positions threonine 166–lysine 273 constitute a TBDR plug domain. The TBDR beta-barrel domain occupies glutamate 278 to phenylalanine 809. Residues tyrosine 792–phenylalanine 809 carry the TonB C-terminal box motif.

The protein belongs to the TonB-dependent receptor family.

The protein resides in the cell outer membrane. In terms of biological role, specific receptor for the siderophores ferric pyoverdines (pseudobactins) BN8 and BN7, iron chelating molecules that allow the organism to extract iron from the environment, especially under iron-restricted conditions. This chain is Ferric-pyoverdine BN7/BN8 receptor (pupB), found in Pseudomonas putida (Arthrobacter siderocapsulatus).